Here is a 311-residue protein sequence, read N- to C-terminus: Small ribosomal subunit protein uS3 (311 aa).

One can recognise a KH type-2 domain in the interval 17-86 (MDEYFAEQLN…NPQIDAQEVK (70 aa)). The tract at residues 190–267 (PDSYTTTEPS…EPQAEVAEDL (78 aa)) is disordered. Residues 194–204 (TTTEPSEPVTE) show a composition bias toward low complexity. The span at 205-231 (PVEKPAEKPAAKPAEKPVEAPKKESAA) shows a compositional bias: basic and acidic residues. Positions 232-247 (KPKTPAVAPEKPVETA) are enriched in low complexity. The span at 248–267 (EVAEPEEAEEEPQAEVAEDL) shows a compositional bias: acidic residues.

It belongs to the universal ribosomal protein uS3 family. As to quaternary structure, part of the 30S ribosomal subunit.

In terms of biological role, binds the lower part of the 30S subunit head. This chain is Small ribosomal subunit protein uS3, found in Methanosarcina barkeri (strain Fusaro / DSM 804).